Here is a 256-residue protein sequence, read N- to C-terminus: Undecaprenyl-diphosphatase (256 aa).

The next 7 helical transmembrane spans lie at 39-59 (PTDA…AVLV), 77-97 (RTVI…YMLF), 101-121 (FTGG…TGLM), 135-155 (ISTK…LPGV), 176-196 (LMVS…LDCL), 206-226 (LPGA…MDVL), and 233-253 (VSFS…TALP).

It belongs to the UppP family.

It localises to the cell membrane. It carries out the reaction di-trans,octa-cis-undecaprenyl diphosphate + H2O = di-trans,octa-cis-undecaprenyl phosphate + phosphate + H(+). Catalyzes the dephosphorylation of undecaprenyl diphosphate (UPP). The sequence is that of Undecaprenyl-diphosphatase from Methanothrix thermoacetophila (strain DSM 6194 / JCM 14653 / NBRC 101360 / PT) (Methanosaeta thermophila).